The chain runs to 305 residues: Glutaminase (305 aa).

Residues Ser-61, Asn-113, Glu-158, Asn-165, Tyr-189, Tyr-241, and Val-259 each contribute to the substrate site.

This sequence belongs to the glutaminase family. Homotetramer.

It catalyses the reaction L-glutamine + H2O = L-glutamate + NH4(+). In Clostridium botulinum (strain Kyoto / Type A2), this protein is Glutaminase.